Consider the following 1240-residue polypeptide: RNA-directed RNA polymerase VP2 (1240 aa).

Positions 516 to 764 (LVANYINKHM…KLYALFGARI (249 aa)) constitute a RdRp catalytic domain.

It belongs to the reoviridae RNA-directed RNA polymerase family.

The protein localises to the virion. The enzyme catalyses RNA(n) + a ribonucleoside 5'-triphosphate = RNA(n+1) + diphosphate. In terms of biological role, RNA-directed RNA polymerase that is involved in transcription and genome replication. Following infection, it catalyzes the synthesis of fully conservative plus strands. After core assembly, which consists in recruitment of one capped plus-strand for each genomic segments and polymerase complexes, the polymerase switches mode and catalyzes the synthesis of complementary minus-strands. The sequence is that of RNA-directed RNA polymerase VP2 (S2) from Oncorhynchus keta (Chum salmon).